We begin with the raw amino-acid sequence, 64 residues long: Translational regulator CsrA 1 (64 aa).

This sequence belongs to the CsrA/RsmA family. As to quaternary structure, homodimer; the beta-strands of each monomer intercalate to form a hydrophobic core, while the alpha-helices form wings that extend away from the core.

Its subcellular location is the cytoplasm. Functionally, a key translational regulator that binds mRNA to regulate translation initiation and/or mRNA stability. Mediates global changes in gene expression, shifting from rapid growth to stress survival by linking envelope stress, the stringent response and the catabolite repression systems. Usually binds in the 5'-UTR; binding at or near the Shine-Dalgarno sequence prevents ribosome-binding, repressing translation, binding elsewhere in the 5'-UTR can activate translation and/or stabilize the mRNA. Its function is antagonized by small RNA(s). The chain is Translational regulator CsrA 1 from Pseudomonas syringae pv. tomato (strain ATCC BAA-871 / DC3000).